The chain runs to 416 residues: Succinate--CoA ligase [ADP-forming] subunit beta (416 aa).

The N-terminal 14 residues, 1–14 (MLRMAPKTVGAVRN), are a transit peptide targeting the hydrogenosome. ATP-binding positions include Lys-64, 71 to 73 (GRG), and Glu-132. Mg(2+) is bound by residues Asn-224 and Asp-242. Residues Asn-293 and 350–352 (GIM) contribute to the substrate site.

This sequence belongs to the succinate/malate CoA ligase beta subunit family. As to quaternary structure, heterodimer of an alpha and a beta subunit. The cofactor is Mg(2+).

It localises to the hydrogenosome. It carries out the reaction succinate + ATP + CoA = succinyl-CoA + ADP + phosphate. Its pathway is carbohydrate metabolism; tricarboxylic acid cycle; succinate from succinyl-CoA (ligase route): step 1/1. Succinyl-CoA synthetase functions in the citric acid cycle (TCA), coupling the hydrolysis of succinyl-CoA to the synthesis of ATP and thus represents the only step of substrate-level phosphorylation in the TCA. The beta subunit provides nucleotide specificity of the enzyme and binds the substrate succinate, while the binding sites for coenzyme A and phosphate are found in the alpha subunit. The sequence is that of Succinate--CoA ligase [ADP-forming] subunit beta (SCSb) from Blastocystis sp. subtype 1 (strain ATCC 50177 / NandII).